The following is a 309-amino-acid chain: Protein-L-isoaspartate O-methyltransferase 2 (309 aa).

The Nuclear localization signal motif lies at 23 to 28; it reads KKRKKK. Residue serine 144 is part of the active site.

Belongs to the methyltransferase superfamily. L-isoaspartyl/D-aspartyl protein methyltransferase family. As to expression, expressed in rosette leaves, stems, cauline leaves, flowers and developing seeds.

The protein resides in the nucleus. It carries out the reaction [protein]-L-isoaspartate + S-adenosyl-L-methionine = [protein]-L-isoaspartate alpha-methyl ester + S-adenosyl-L-homocysteine. Functionally, catalyzes the methyl esterification of L-isoaspartyl residues in peptides and proteins that result from spontaneous decomposition of normal L-aspartyl and L-asparaginyl residues. It plays a role in the repair and/or degradation of damaged proteins. The protein is Protein-L-isoaspartate O-methyltransferase 2 (PIMT2) of Arabidopsis thaliana (Mouse-ear cress).